The following is a 184-amino-acid chain: Peptide deformylase (184 aa).

Fe cation is bound by residues cysteine 111 and histidine 154. The active site involves glutamate 155. Position 158 (histidine 158) interacts with Fe cation.

The protein belongs to the polypeptide deformylase family. Fe(2+) is required as a cofactor.

It catalyses the reaction N-terminal N-formyl-L-methionyl-[peptide] + H2O = N-terminal L-methionyl-[peptide] + formate. Functionally, removes the formyl group from the N-terminal Met of newly synthesized proteins. Requires at least a dipeptide for an efficient rate of reaction. N-terminal L-methionine is a prerequisite for activity but the enzyme has broad specificity at other positions. This Macrococcus caseolyticus (strain JCSC5402) (Macrococcoides caseolyticum) protein is Peptide deformylase.